The sequence spans 201 residues: LexA repressor 1 (201 aa).

The H-T-H motif DNA-binding region spans 27–47 (LAEIAQAFGFASRNAAQKHVQ). Active-site for autocatalytic cleavage activity residues include Ser-122 and Lys-159.

It belongs to the peptidase S24 family. In terms of assembly, homodimer.

The catalysed reaction is Hydrolysis of Ala-|-Gly bond in repressor LexA.. In terms of biological role, represses a number of genes involved in the response to DNA damage (SOS response), including recA and lexA. In the presence of single-stranded DNA, RecA interacts with LexA causing an autocatalytic cleavage which disrupts the DNA-binding part of LexA, leading to derepression of the SOS regulon and eventually DNA repair. In Xanthomonas axonopodis pv. citri (strain 306), this protein is LexA repressor 1.